A 452-amino-acid polypeptide reads, in one-letter code: Isocitrate dehydrogenase [NADP], mitochondrial (452 aa).

The transit peptide at 1-39 (MAGYLRAVSSLCRASGSTRTWAPAALNVPSWPEQPRRHY) directs the protein to the mitochondrion. An N6-acetyllysine mark is found at Lys45, Lys48, Lys67, and Lys69. Lys80 and Lys106 each carry N6-acetyllysine; alternate. 2 positions are modified to N6-succinyllysine; alternate: Lys80 and Lys106. Residues 115 to 117 (TIT) and Arg122 contribute to the NADP(+) site. Thr117 contacts D-threo-isocitrate. D-threo-isocitrate is bound by residues 134-140 (SPNGTIR) and Arg149. Lys155 is modified (N6-acetyllysine). N6-acetyllysine; alternate is present on Lys166. An N6-succinyllysine; alternate modification is found at Lys166. Residue Arg172 coordinates D-threo-isocitrate. Lys180 and Lys193 each carry N6-acetyllysine; alternate. An N6-succinyllysine; alternate mark is found at Lys180 and Lys193. Lys199 carries the post-translational modification N6-acetyllysine. Lys256 carries the N6-acetyllysine; alternate modification. At Lys256 the chain carries N6-succinyllysine; alternate. N6-acetyllysine occurs at positions 263, 272, 275, and 280. Lys282 bears the N6-acetyllysine; alternate mark. At Lys282 the chain carries N6-succinyllysine; alternate. Asp291 contacts Mn(2+). Lys299 contributes to the NADP(+) binding site. Residue Asp314 participates in Mn(2+) binding. NADP(+)-binding positions include 349–354 (GTVTRH) and Asn367. Lys384 is modified (N6-acetyllysine; alternate). Position 384 is an N6-succinyllysine; alternate (Lys384). An N6-acetyllysine mark is found at Lys400, Lys413, and Lys442.

It belongs to the isocitrate and isopropylmalate dehydrogenases family. As to quaternary structure, homodimer. Requires Mg(2+) as cofactor. Mn(2+) is required as a cofactor. Acetylation at Lys-413 dramatically reduces catalytic activity. Deacetylated by SIRT3.

The protein localises to the mitochondrion. The enzyme catalyses D-threo-isocitrate + NADP(+) = 2-oxoglutarate + CO2 + NADPH. In terms of biological role, plays a role in intermediary metabolism and energy production. It may tightly associate or interact with the pyruvate dehydrogenase complex. In Rattus norvegicus (Rat), this protein is Isocitrate dehydrogenase [NADP], mitochondrial (Idh2).